We begin with the raw amino-acid sequence, 390 residues long: LL-diaminopimelate aminotransferase 2 (390 aa).

Residues Y13 and G38 each coordinate substrate. Pyridoxal 5'-phosphate-binding positions include Y67, 102-103, Y127, N177, Y208, and 236-238; these read SK and SLS. Positions 103, 127, and 177 each coordinate substrate. Residue K239 is modified to N6-(pyridoxal phosphate)lysine. Position 247 (R247) interacts with pyridoxal 5'-phosphate. R365 contacts substrate.

Belongs to the class-I pyridoxal-phosphate-dependent aminotransferase family. LL-diaminopimelate aminotransferase subfamily. Homodimer. Pyridoxal 5'-phosphate is required as a cofactor.

The catalysed reaction is (2S,6S)-2,6-diaminopimelate + 2-oxoglutarate = (S)-2,3,4,5-tetrahydrodipicolinate + L-glutamate + H2O + H(+). Its pathway is amino-acid biosynthesis; L-lysine biosynthesis via DAP pathway; LL-2,6-diaminopimelate from (S)-tetrahydrodipicolinate (aminotransferase route): step 1/1. Functionally, involved in the synthesis of meso-diaminopimelate (m-DAP or DL-DAP), required for both lysine and peptidoglycan biosynthesis. Catalyzes the direct conversion of tetrahydrodipicolinate to LL-diaminopimelate. This is LL-diaminopimelate aminotransferase 2 from Trichormus variabilis (strain ATCC 29413 / PCC 7937) (Anabaena variabilis).